The sequence spans 314 residues: tRNA dimethylallyltransferase (314 aa).

11 to 18 (GPTGSGKT) lines the ATP pocket. Substrate is bound at residue 13 to 18 (TGSGKT). An interaction with substrate tRNA region spans residues 36-39 (DSMQ).

Belongs to the IPP transferase family. In terms of assembly, monomer. The cofactor is Mg(2+).

The catalysed reaction is adenosine(37) in tRNA + dimethylallyl diphosphate = N(6)-dimethylallyladenosine(37) in tRNA + diphosphate. Its function is as follows. Catalyzes the transfer of a dimethylallyl group onto the adenine at position 37 in tRNAs that read codons beginning with uridine, leading to the formation of N6-(dimethylallyl)adenosine (i(6)A). The chain is tRNA dimethylallyltransferase from Chlamydia trachomatis serovar D (strain ATCC VR-885 / DSM 19411 / UW-3/Cx).